The primary structure comprises 164 residues: C-type lectin 1 (164 aa).

A signal peptide spans 1 to 23 (MGRFLFASLGLLVVAFSLSGTGA). 3 cysteine pairs are disulfide-bonded: Cys27/Cys38, Cys55/Cys154, and Cys129/Cys146. A C-type lectin domain is found at 34 to 155 (YNVSCYKLFY…CTLLHPFLCQ (122 aa)). Asn35 and Asn109 each carry an N-linked (GlcNAc...) asparagine glycan. A Mannose-binding motif is present at residues 119–121 (EPN). Residues Glu127, Asn142, and Asp143 each coordinate Ca(2+).

This sequence belongs to the true venom lectin family. In terms of tissue distribution, expressed by the venom gland.

The protein localises to the secreted. Functionally, mannose-binding lectin which recognizes specific carbohydrate structures and agglutinates a variety of animal cells by binding to cell-surface glycoproteins and glycolipids. May be a calcium-dependent lectin. The chain is C-type lectin 1 from Hydrophis hardwickii (Hardwick's spine-bellied seasnake).